We begin with the raw amino-acid sequence, 348 residues long: MYDFFMTWLLPFLIIVGKTLLLLVVLLVLVAYLLYADRKIWAAVQLRRGPNVVGPWGLLQSFADLIKFVVKEPIIPAGANKGVFLLAPFVSATLALSTWAVIPVSEGWEVAKINVGLLYILAISSLEVYGVIMGGWASNSKYPFLGALRSAAQMVSYEVSIGFVLVTVILISGSLDLTTIVLKQGQGLGTTLGLPFNSFLDWNWLVLFPMFIIFFISALAETNRPPFDLVEAESELVAGHMVEYSSTPYMLFFLGEYVAIVLMCALTTILFLGGWLPPLDVWWLNWIPGVIWFVLKVCFVFFWFAIVKAFVPRYRYDQLMRLGWKVFLPLSLAMVVITAAFLKFTNFV.

8 helical membrane-spanning segments follow: residues 10–30, 82–102, 115–135, 161–181, 199–219, 251–271, 287–307, and 322–342; these read LPFL…LVLV, GVFL…WAVI, VGLL…IMGG, IGFV…TTIV, FLDW…ISAL, LFFL…TILF, IPGV…FAIV, and LGWK…AAFL.

The protein belongs to the complex I subunit 1 family. NDH-1 is composed of 14 different subunits. Subunits NuoA, H, J, K, L, M, N constitute the membrane sector of the complex.

It is found in the cell inner membrane. It carries out the reaction a quinone + NADH + 5 H(+)(in) = a quinol + NAD(+) + 4 H(+)(out). Functionally, NDH-1 shuttles electrons from NADH, via FMN and iron-sulfur (Fe-S) centers, to quinones in the respiratory chain. The immediate electron acceptor for the enzyme in this species is believed to be ubiquinone. Couples the redox reaction to proton translocation (for every two electrons transferred, four hydrogen ions are translocated across the cytoplasmic membrane), and thus conserves the redox energy in a proton gradient. This subunit may bind ubiquinone. The protein is NADH-quinone oxidoreductase subunit H of Bartonella tribocorum (strain CIP 105476 / IBS 506).